Reading from the N-terminus, the 175-residue chain is Peptide deformylase (175 aa).

Fe cation-binding residues include cysteine 99 and histidine 141. The active site involves glutamate 142. Fe cation is bound at residue histidine 145.

Belongs to the polypeptide deformylase family. Fe(2+) serves as cofactor.

The enzyme catalyses N-terminal N-formyl-L-methionyl-[peptide] + H2O = N-terminal L-methionyl-[peptide] + formate. Its function is as follows. Removes the formyl group from the N-terminal Met of newly synthesized proteins. Requires at least a dipeptide for an efficient rate of reaction. N-terminal L-methionine is a prerequisite for activity but the enzyme has broad specificity at other positions. This Rickettsia canadensis (strain McKiel) protein is Peptide deformylase.